The chain runs to 73 residues: uncharacterized protein (73 aa).

The next 2 membrane-spanning stretches (helical) occupy residues 10-30 and 42-62; these read ILLA…YVSA and YSTV…IYLI.

Its subcellular location is the cell membrane. This is an uncharacterized protein from Archaeoglobus fulgidus (strain ATCC 49558 / DSM 4304 / JCM 9628 / NBRC 100126 / VC-16).